A 543-amino-acid chain; its full sequence is Cysteine/serine-rich nuclear protein 2 (543 aa).

Met-1 is subject to N-acetylmethionine. 3 disordered regions span residues 1–51, 281–305, and 488–543; these read MDAF…SFTP, KRQV…LTGA, and DCNP…PLAV. The segment covering 31 to 40 has biased composition (low complexity); sequence SSDSADSCDS. Composition is skewed to polar residues over residues 42–51 and 296–305; these read NPPTTASFTP and PTASCSLTGA.

It belongs to the AXUD1 family.

Its subcellular location is the nucleus. Its function is as follows. Binds to the consensus sequence 5'-AGAGTG-3' and has transcriptional activator activity. May play a role in apoptosis. The polypeptide is Cysteine/serine-rich nuclear protein 2 (CSRNP2) (Homo sapiens (Human)).